Here is a 212-residue protein sequence, read N- to C-terminus: MTDTKKTLFSAPTDEQLDTLTLTIESNLVPSISELEAIAKDWKTLGLQEADFTANAIKIAWFCYHSGSSESVQVQGNSTSDKIPLYQLAGVVRQHSTLRRFCRYFAKVIWNYALRKNQPPANWASQNYKEADRFAAFDFFEGVSSSAALSPPGGLIREPSPNERMANETNKNVHLYQTASRGSNLATTSTVATKGAYSTNASNAGFPYHRPE.

It belongs to the potexvirus capsid protein family.

Its subcellular location is the virion. In terms of biological role, required for genome encapsidation. Forms ribonucleoprotein complexes along with TGB1 helicase and viral RNA. In Chenopodium album (Fat hen), this protein is Coat protein.